Here is a 186-residue protein sequence, read N- to C-terminus: dCTP deaminase, dUMP-forming (186 aa).

DCTP contacts are provided by residues 101–106 (RSSLGR), Asp-119, 127–129 (TLE), Gln-148, Tyr-162, and Gln-171. Glu-129 acts as the Proton donor/acceptor in catalysis.

The protein belongs to the dCTP deaminase family. As to quaternary structure, homotrimer.

It catalyses the reaction dCTP + 2 H2O = dUMP + NH4(+) + diphosphate. It functions in the pathway pyrimidine metabolism; dUMP biosynthesis; dUMP from dCTP: step 1/1. Functionally, bifunctional enzyme that catalyzes both the deamination of dCTP to dUTP and the hydrolysis of dUTP to dUMP without releasing the toxic dUTP intermediate. This chain is dCTP deaminase, dUMP-forming, found in Coprothermobacter proteolyticus (strain ATCC 35245 / DSM 5265 / OCM 4 / BT).